Consider the following 200-residue polypeptide: ATP synthase subunit s, mitochondrial (200 aa).

A mitochondrion-targeting transit peptide spans 1-25; sequence MMLFGKISQQLCGLKKLPWSRDSRY. The N-terminal domain stretch occupies residues 1 to 61; that stretch reads MMLFGKISQQ…SEWLLRCGAM (61 aa). Residue glycine 59 coordinates Mg(2+). LRR repeat units follow at residues 62–87, 88–116, 117–141, and 142–173; these read VRYH…KYKI, QAID…KIRL, CKCH…KSML, and EMEI…LSDL. Threonine 93 contributes to the Mg(2+) binding site.

It belongs to the ATP synthase subunit s family. As to quaternary structure, homotetramer. Associates with ATP synthase.

Its subcellular location is the mitochondrion. The protein localises to the mitochondrion inner membrane. Functionally, involved in regulation of mitochondrial membrane ATP synthase. Necessary for H(+) conduction of ATP synthase. Facilitates energy-driven catalysis of ATP synthesis by blocking a proton leak through an alternative proton exit pathway. In Bos taurus (Bovine), this protein is ATP synthase subunit s, mitochondrial (DMAC2L).